The following is a 674-amino-acid chain: Protein kinase C delta type (674 aa).

The 106-residue stretch at 1 to 106 (MAPFLRISFN…KNNGKAEFWL (106 aa)) folds into the C2 domain. T43 and T50 each carry phosphothreonine. Y64 is modified (phosphotyrosine). S130 is subject to Phosphoserine. Phosphothreonine is present on T141. Y155 is modified (phosphotyrosine). The segment at 158–208 (NHEFIATFFGQPTFCSVCKEFVWGLNKQGYKCRQCNAAIHKKCIDKIIGRC) adopts a Phorbol-ester/DAG-type 1 zinc-finger fold. T218 is subject to Phosphothreonine. The segment at 230–280 (PHRFKVYNYMSPTFCDHCGSLLWGLVKQGLKCEDCGMNVHHKCREKVANLC) adopts a Phorbol-ester/DAG-type 2 zinc-finger fold. S299 carries the phosphoserine; by autocatalysis modification. Y311 and Y332 each carry phosphotyrosine; by SRC. A Protein kinase domain is found at 347–601 (FTFQKVLGKG…TGNIRIHPFF (255 aa)). Residue 353–361 (LGKGSFGKV) participates in ATP binding. Position 372 is a phosphotyrosine (Y372). ATP is bound at residue K376. Phosphothreonine is present on T449. The active-site Proton acceptor is D471. S504 carries the post-translational modification Phosphoserine. Residue T505 is modified to Phosphothreonine; by autocatalysis. Residue Y565 is modified to Phosphotyrosine. One can recognise an AGC-kinase C-terminal domain in the interval 602–673 (KTINWSLLEK…VNPKFEQFLD (72 aa)). A phosphoserine mark is found at S643, S652, and S662.

This sequence belongs to the protein kinase superfamily. AGC Ser/Thr protein kinase family. PKC subfamily. Interacts with PDPK1 (via N-terminal region). Interacts with RAD9A. Interacts with CDCP1. Interacts with MUC1. Interacts with VASP. Interacts with CAVIN3. Interacts with PRKD2 (via N-terminus and zing-finger domain 1 and 2) in response to oxidative stress; the interaction is independent of PRKD2 tyrosine phosphorylation. Interacts with PLSC3; interaction is enhanced by UV irradiation. In terms of processing, autophosphorylated and/or phosphorylated at Thr-505, within the activation loop; phosphorylation at Thr-505 is not a prerequisite for enzymatic activity. Autophosphorylated at Ser-299. Upon TNFSF10/TRAIL treatment, phosphorylated at Tyr-155; phosphorylation is required for its translocation to the endoplasmic reticulum and cleavage by caspase-3. Phosphorylated at Tyr-311, Tyr-332 and Tyr-565; phosphorylation of Tyr-311 and Tyr-565 following thrombin or zymosan stimulation potentiates its kinase activity. Phosphorylated by protein kinase PDPK1; phosphorylation is inhibited by the apoptotic C-terminal cleavage product of PKN2. Phosphorylated at Tyr-311 through a SYK and SRC mechanism downstream of C-type lectin receptors activation, promoting its activation. Post-translationally, proteolytically cleaved into a catalytic subunit and a regulatory subunit by caspase-3 during apoptosis which results in kinase activation. In terms of tissue distribution, isoform 1 is highly expressed in developing pro- and pre-B-cells and moderately in mature T-cells. Isoform 2 is highly expressed in testis and ovary and at a lower level in thymocytes, brain and kidney.

The protein localises to the cytoplasm. It is found in the perinuclear region. It localises to the nucleus. Its subcellular location is the cell membrane. The protein resides in the mitochondrion. The protein localises to the endomembrane system. The enzyme catalyses L-seryl-[protein] + ATP = O-phospho-L-seryl-[protein] + ADP + H(+). The catalysed reaction is L-threonyl-[protein] + ATP = O-phospho-L-threonyl-[protein] + ADP + H(+). It carries out the reaction L-tyrosyl-[protein] + ATP = O-phospho-L-tyrosyl-[protein] + ADP + H(+). Its activity is regulated as follows. Novel PKCs (PRKCD, PRKCE, PRKCH and PRKCQ) are calcium-insensitive, but activated by diacylglycerol (DAG) and phosphatidylserine. Three specific sites; Thr-505 (activation loop of the kinase domain), Ser-643 (turn motif) and Ser-662 (hydrophobic region), need to be phosphorylated for its full activation. Activated by caspase-3 (CASP3) cleavage during apoptosis. After cleavage, the pseudosubstrate motif in the regulatory subunit is released from the substrate recognition site of the catalytic subunit, which enables PRKCD to become constitutively activated. The catalytic subunit which displays properties of a sphingosine-dependent protein kinase is activated by D-erythro-sphingosine (Sph) or N,N-dimethyl-D-erythrosphingosine (DMS) or N,N,N-trimethyl-D-erythrosphingosine (TMS), but not by ceramide or Sph-1-P and is strongly inhibited by phosphatidylserine. Calcium-independent, phospholipid- and diacylglycerol (DAG)-dependent serine/threonine-protein kinase that plays contrasting roles in cell death and cell survival by functioning as a pro-apoptotic protein during DNA damage-induced apoptosis, but acting as an anti-apoptotic protein during cytokine receptor-initiated cell death, is involved in tumor suppression, is required for oxygen radical production by NADPH oxidase and acts as a positive or negative regulator in platelet functional responses. Negatively regulates B cell proliferation and also has an important function in self-antigen induced B cell tolerance induction. Upon DNA damage, activates the promoter of the death-promoting transcription factor BCLAF1/Btf to trigger BCLAF1-mediated p53/TP53 gene transcription and apoptosis. In response to oxidative stress, interact with and activate CHUK/IKKA in the nucleus, causing the phosphorylation of p53/TP53. In the case of ER stress or DNA damage-induced apoptosis, can form a complex with the tyrosine-protein kinase ABL1 which trigger apoptosis independently of p53/TP53. In cytosol can trigger apoptosis by activating MAPK11 or MAPK14, inhibiting AKT1 and decreasing the level of X-linked inhibitor of apoptosis protein (XIAP), whereas in nucleus induces apoptosis via the activation of MAPK8 or MAPK9. Upon ionizing radiation treatment, is required for the activation of the apoptosis regulators BAX and BAK, which trigger the mitochondrial cell death pathway. Can phosphorylate MCL1 and target it for degradation which is sufficient to trigger for BAX activation and apoptosis. Is required for the control of cell cycle progression both at G1/S and G2/M phases. Mediates phorbol 12-myristate 13-acetate (PMA)-induced inhibition of cell cycle progression at G1/S phase by up-regulating the CDK inhibitor CDKN1A/p21 and inhibiting the cyclin CCNA2 promoter activity. In response to UV irradiation can phosphorylate CDK1, which is important for the G2/M DNA damage checkpoint activation. Can protect glioma cells from the apoptosis induced by TNFSF10/TRAIL, probably by inducing increased phosphorylation and subsequent activation of AKT1. Can also act as tumor suppressor upon mitogenic stimulation with PMA or TPA. In N-formyl-methionyl-leucyl-phenylalanine (fMLP)-treated cells, is required for NCF1 (p47-phox) phosphorylation and activation of NADPH oxidase activity, and regulates TNF-elicited superoxide anion production in neutrophils, by direct phosphorylation and activation of NCF1 or indirectly through MAPK1/3 (ERK1/2) signaling pathways. Involved in antifungal immunity by mediating phosphorylation and activation of CARD9 downstream of C-type lectin receptors activation, promoting interaction between CARD9 and BCL10, followed by activation of NF-kappa-B and MAP kinase p38 pathways. May also play a role in the regulation of NADPH oxidase activity in eosinophil after stimulation with IL5, leukotriene B4 or PMA. In collagen-induced platelet aggregation, acts a negative regulator of filopodia formation and actin polymerization by interacting with and negatively regulating VASP phosphorylation. Downstream of PAR1, PAR4 and CD36/GP4 receptors, regulates differentially platelet dense granule secretion; acts as a positive regulator in PAR-mediated granule secretion, whereas it negatively regulates CD36/GP4-mediated granule release. Phosphorylates MUC1 in the C-terminal and regulates the interaction between MUC1 and beta-catenin. The catalytic subunit phosphorylates 14-3-3 proteins (YWHAB, YWHAZ and YWHAH) in a sphingosine-dependent fashion. Phosphorylates ELAVL1 in response to angiotensin-2 treatment. Phosphorylates mitochondrial phospholipid scramblase 3 (PLSCR3), resulting in increased cardiolipin expression on the mitochondrial outer membrane which facilitates apoptosis. Phosphorylates SMPD1 which induces SMPD1 secretion. In Mus musculus (Mouse), this protein is Protein kinase C delta type.